The following is a 529-amino-acid chain: Probable serine carboxypeptidase ARB_06414 (529 aa).

The N-terminal stretch at 1–19 (MRGLSYFVLALSAIDAAAA) is a signal peptide. A disordered region spans residues 171–191 (PTDDNPSRPVGTGFSQGKPSV). S225 is an active-site residue. 2 N-linked (GlcNAc...) asparagine glycosylation sites follow: N284 and N377. Residue D434 is part of the active site. 2 N-linked (GlcNAc...) asparagine glycosylation sites follow: N440 and N448. The active site involves H503.

The protein belongs to the peptidase S10 family.

It is found in the secreted. Its function is as follows. Removes acidic, neutral and basic amino acids as well as proline from the C-terminal position. In Arthroderma benhamiae (strain ATCC MYA-4681 / CBS 112371) (Trichophyton mentagrophytes), this protein is Probable serine carboxypeptidase ARB_06414.